We begin with the raw amino-acid sequence, 214 residues long: Thiamine-phosphate synthase (214 aa).

Residues 37-41 (QYREK) and Asn73 contribute to the 4-amino-2-methyl-5-(diphosphooxymethyl)pyrimidine site. 2 residues coordinate Mg(2+): Asp74 and Asp93. Position 112 (Ser112) interacts with 4-amino-2-methyl-5-(diphosphooxymethyl)pyrimidine. Residue 139 to 141 (TIS) coordinates 2-[(2R,5Z)-2-carboxy-4-methylthiazol-5(2H)-ylidene]ethyl phosphate. Position 142 (Lys142) interacts with 4-amino-2-methyl-5-(diphosphooxymethyl)pyrimidine. 2-[(2R,5Z)-2-carboxy-4-methylthiazol-5(2H)-ylidene]ethyl phosphate-binding positions include Gly171 and 191-192 (IS).

This sequence belongs to the thiamine-phosphate synthase family. It depends on Mg(2+) as a cofactor.

The catalysed reaction is 2-[(2R,5Z)-2-carboxy-4-methylthiazol-5(2H)-ylidene]ethyl phosphate + 4-amino-2-methyl-5-(diphosphooxymethyl)pyrimidine + 2 H(+) = thiamine phosphate + CO2 + diphosphate. It carries out the reaction 2-(2-carboxy-4-methylthiazol-5-yl)ethyl phosphate + 4-amino-2-methyl-5-(diphosphooxymethyl)pyrimidine + 2 H(+) = thiamine phosphate + CO2 + diphosphate. The enzyme catalyses 4-methyl-5-(2-phosphooxyethyl)-thiazole + 4-amino-2-methyl-5-(diphosphooxymethyl)pyrimidine + H(+) = thiamine phosphate + diphosphate. The protein operates within cofactor biosynthesis; thiamine diphosphate biosynthesis; thiamine phosphate from 4-amino-2-methyl-5-diphosphomethylpyrimidine and 4-methyl-5-(2-phosphoethyl)-thiazole: step 1/1. In terms of biological role, condenses 4-methyl-5-(beta-hydroxyethyl)thiazole monophosphate (THZ-P) and 2-methyl-4-amino-5-hydroxymethyl pyrimidine pyrophosphate (HMP-PP) to form thiamine monophosphate (TMP). This chain is Thiamine-phosphate synthase, found in Listeria monocytogenes serovar 1/2a (strain ATCC BAA-679 / EGD-e).